Reading from the N-terminus, the 3381-residue chain is Versican core protein (3381 aa).

Residues 1–20 (MLINIKSILWMCSTLIAAHA) form the signal peptide. An Ig-like V-type domain is found at 21–147 (LQKVNMEKSP…EDTQDTVSLT (127 aa)). Cystine bridges form between cysteine 44-cysteine 131, cysteine 173-cysteine 244, cysteine 197-cysteine 218, cysteine 271-cysteine 346, and cysteine 295-cysteine 316. Asparagine 57 carries N-linked (GlcNAc...) asparagine glycosylation. Link domains are found at residues 151–246 (VVFH…YCYV) and 252–348 (DVFH…YCFK). Residues asparagine 331 and asparagine 352 are each glycosylated (N-linked (GlcNAc...) asparagine). Residues 349 to 1336 (PKQNISEATT…IIEVRENKTG (988 aa)) form a GAG-alpha (glucosaminoglycan attachment domain) region. Residues 417 to 427 (PLTSTHRSATE) show a composition bias toward polar residues. Disordered regions lie at residues 417-437 (PLTS…SMKK) and 603-623 (ESVS…MDHR). The O-linked (Xyl...) (chondroitin sulfate) serine glycan is linked to serine 660. Residues 816–866 (DNTTSKPLGSTEHVGSPKLPPALITTTGVSGKDKEMPSLTEDGRDEFTRIP) form a disordered region. Asparagine 817 carries an N-linked (GlcNAc...) asparagine glycan. Positions 846-863 (GKDKEMPSLTEDGRDEFT) are enriched in basic and acidic residues. 2 N-linked (GlcNAc...) asparagine glycosylation sites follow: asparagine 965 and asparagine 1017. Positions 1043–1052 (EDFLWKEQTP) are enriched in basic and acidic residues. 2 disordered regions span residues 1043 to 1081 (EDFL…SDGS) and 1218 to 1244 (FSSA…PDEE). A glycan (N-linked (GlcNAc...) asparagine) is linked at asparagine 1333. Residues 1337 to 3074 (RMSDFSVSGH…VEGTAVYLPG (1738 aa)) are GAG-beta. The tract at residues 1338-1362 (MSDFSVSGHPIDSESKEDEPCSEET) is disordered. Over residues 1352–1362 (SKEDEPCSEET) the composition is skewed to acidic residues. Asparagine 1393 carries N-linked (GlcNAc...) asparagine glycosylation. The span at 1417 to 1428 (KDPEAAEARRGQ) shows a compositional bias: basic and acidic residues. Disordered regions lie at residues 1417-1446 (KDPE…ESDS), 1455-1474 (GLPT…SLEI), and 1484-1512 (TAEP…GPDS). N-linked (GlcNAc...) asparagine glycans are attached at residues asparagine 1437 and asparagine 1463. O-linked (Xyl...) (chondroitin sulfate) serine glycans are attached at residues serine 1539 and serine 1621. A glycan (N-linked (GlcNAc...) asparagine) is linked at asparagine 1653. Residues 1708 to 1785 (PPLEETTRKE…ERETTSSTVV (78 aa)) are disordered. The segment covering 1712–1721 (ETTRKEEEKG) has biased composition (basic and acidic residues). The segment covering 1726 to 1738 (ASTVEVHSPTQRL) has biased composition (polar residues). Over residues 1743-1761 (SPSELESSSETPPDDSAAA) the composition is skewed to low complexity. Residues 1764-1784 (KSFTSQMTPTQSERETTSSTV) are compositionally biased toward polar residues. 2 O-linked (Xyl...) (chondroitin sulfate) serine glycosylation sites follow: serine 1928 and serine 1952. Residues 1964 to 1976 (PSVTPTSDLSNHT) show a composition bias toward polar residues. 2 disordered regions span residues 1964–1986 (PSVT…GSTL) and 2041–2126 (EGAI…QSSV). Asparagine 1974, asparagine 2045, asparagine 2074, and asparagine 2103 each carry an N-linked (GlcNAc...) asparagine glycan. A compositionally biased stretch (basic and acidic residues) spans 2065–2075 (STEEGEVKENH). Serine 2109 bears the Phosphoserine mark. O-linked (Xyl...) (chondroitin sulfate) serine glycans are attached at residues serine 2240 and serine 2247. N-linked (GlcNAc...) asparagine glycans are attached at residues asparagine 2263, asparagine 2290, and asparagine 2356. Disordered stretches follow at residues 2338–2388 (EGPF…AETK), 2490–2512 (EQRE…EKAT), and 2594–2615 (TDLD…TQVQ). 2 stretches are compositionally biased toward polar residues: residues 2345–2357 (LTFS…PQNQ) and 2367–2383 (TSRP…ENSV). A phosphoserine mark is found at serine 2607 and serine 2608. Threonine 2612 is subject to Phosphothreonine. N-linked (GlcNAc...) asparagine glycosylation is found at asparagine 2623 and asparagine 2641. 3 O-linked (Xyl...) (chondroitin sulfate) serine glycosylation sites follow: serine 2714, serine 2715, and serine 2759. The tract at residues 2819–2893 (PPLSIHLGSG…EPSEDESKPK (75 aa)) is disordered. The segment covering 2840–2851 (ALPSTDASTPPV) has biased composition (polar residues). N-linked (GlcNAc...) asparagine glycans are attached at residues asparagine 2919 and asparagine 3052. In terms of domain architecture, EGF-like 1 spans 3074 to 3110 (GPDRCKMNPCLNGGTCYPTETSYVCTCVPGYSGDRCE). Cystine bridges form between cysteine 3078–cysteine 3089, cysteine 3083–cysteine 3098, cysteine 3100–cysteine 3109, cysteine 3116–cysteine 3127, cysteine 3121–cysteine 3136, cysteine 3138–cysteine 3147, cysteine 3154–cysteine 3165, cysteine 3182–cysteine 3274, cysteine 3250–cysteine 3266, cysteine 3281–cysteine 3324, and cysteine 3310–cysteine 3337. The 37-residue stretch at 3112–3148 (DFDECHSNPCRNGATCIDGFNTFRCLCLPSYVGALCE) folds into the EGF-like 2; calcium-binding domain. In terms of domain architecture, C-type lectin spans 3161–3275 (FQGQCYKYFA…CNYHLTYTCK (115 aa)). The 61-residue stretch at 3279–3339 (VACGQPPVVE…WAMPKITCLN (61 aa)) folds into the Sushi domain. Residues asparagine 3354 and asparagine 3364 are each glycosylated (N-linked (GlcNAc...) asparagine). Residues 3355–3365 (SSSAKDNSINT) show a composition bias toward polar residues. The tract at residues 3355-3381 (SSSAKDNSINTSKHDHRWSRRWQESRR) is disordered.

This sequence belongs to the aggrecan/versican proteoglycan family. Interacts with FBLN1. Phosphorylated by FAM20C in the extracellular medium. In terms of processing, proteolytically cleaved by ADAMTS5 and ADAMTS15 in the pericellular matrix surrounding myoblasts, facilitating myoblast contact and fusion which is required for skeletal muscle development and regeneration. In terms of tissue distribution, cerebral white matter. Isoform V0 and isoform V1 are expressed in the central nervous system, and in a number of mesenchymal and epithelial tissues; the major isoform V2 is restricted to the central nervous system.

It is found in the secreted. The protein resides in the extracellular space. Its subcellular location is the extracellular matrix. It localises to the cell projection. The protein localises to the cilium. It is found in the photoreceptor outer segment. The protein resides in the interphotoreceptor matrix. Its function is as follows. May play a role in intercellular signaling and in connecting cells with the extracellular matrix. May take part in the regulation of cell motility, growth and differentiation. Binds hyaluronic acid. The polypeptide is Versican core protein (VCAN) (Bos taurus (Bovine)).